Here is a 229-residue protein sequence, read N- to C-terminus: Rab-like protein 2A (229 aa).

Residues 28–35, 76–80, and 133–136 contribute to the GTP site; these read GDSAVGKS, DTAGQ, and NKID. Residues 200-229 form a disordered region; that stretch reads NLEQEEEDVPDQEQSGSIETPSEEVASPHS.

It belongs to the small GTPase superfamily. Rab family. Interacts with IFT27, IFT81, IFT172, ATP6V1E1, HK1, LDHC, MAPRE1 and HSPA2.

Functionally, plays an essential role in male fertility, sperm intra-flagellar transport, and tail assembly. Binds, in a GTP-regulated manner, to a specific set of effector proteins including key proteins involved in cilia development and function and delivers them into the growing sperm tail. The chain is Rab-like protein 2A (RABL2A) from Pongo abelii (Sumatran orangutan).